The chain runs to 309 residues: uncharacterized protein (309 aa).

Pro residues-rich tracts occupy residues 1-17 and 24-51; these read MTSRAPSPPTPPCPSPP and SPVPTATPASPPLKPLSNPLPPPPPTPR. Disordered stretches follow at residues 1 to 174 and 216 to 240; these read MTSR…PPGV and PPDLPSPPLSPPLSPPLSPISPLHA. The span at 67 to 83 shows a compositional bias: low complexity; sequence LRSSPSSALNASRGAPS. The segment covering 84-112 has biased composition (pro residues); it reads TSPPPSSSPPSSPASTPPSRTPSPTPTAP. Low complexity-rich tracts occupy residues 113–125 and 135–144; these read ASPVASTAMTPAS and APSSSAALSS. Positions 160–174 are enriched in pro residues; sequence PPPPLPPPLQPPPGV. Residues 278 to 298 traverse the membrane as a helical segment; sequence LFLLFTLLSIHFSPFPIFILL.

The protein resides in the host membrane. This is an uncharacterized protein from Vitis vinifera (Grape).